Reading from the N-terminus, the 181-residue chain is Adenylyl-sulfate kinase (181 aa).

Position 12-19 (12-19) interacts with ATP; sequence GLSGAGKT. Residue Ser-86 is the Phosphoserine intermediate of the active site.

This sequence belongs to the APS kinase family.

It carries out the reaction adenosine 5'-phosphosulfate + ATP = 3'-phosphoadenylyl sulfate + ADP + H(+). Its pathway is sulfur metabolism; hydrogen sulfide biosynthesis; sulfite from sulfate: step 2/3. Its function is as follows. Catalyzes the synthesis of activated sulfate. The chain is Adenylyl-sulfate kinase from Rippkaea orientalis (strain PCC 8801 / RF-1) (Cyanothece sp. (strain PCC 8801)).